Consider the following 238-residue polypeptide: 7-cyano-7-deazaguanine synthase (238 aa).

14 to 24 (FSGGQDSTTCL) lines the ATP pocket. Residues Cys195, Cys204, Cys207, and Cys210 each coordinate Zn(2+).

Belongs to the QueC family. Zn(2+) is required as a cofactor.

The catalysed reaction is 7-carboxy-7-deazaguanine + NH4(+) + ATP = 7-cyano-7-deazaguanine + ADP + phosphate + H2O + H(+). The protein operates within purine metabolism; 7-cyano-7-deazaguanine biosynthesis. Its function is as follows. Catalyzes the ATP-dependent conversion of 7-carboxy-7-deazaguanine (CDG) to 7-cyano-7-deazaguanine (preQ(0)). In Baumannia cicadellinicola subsp. Homalodisca coagulata, this protein is 7-cyano-7-deazaguanine synthase.